The following is a 222-amino-acid chain: uncharacterized protein (222 aa).

It belongs to the PhoU family.

The protein localises to the cytoplasm. In terms of biological role, not known; probably involved in phosphate transport and/or metabolism. This is an uncharacterized protein from Deinococcus radiodurans (strain ATCC 13939 / DSM 20539 / JCM 16871 / CCUG 27074 / LMG 4051 / NBRC 15346 / NCIMB 9279 / VKM B-1422 / R1).